A 150-amino-acid polypeptide reads, in one-letter code: UPF0178 protein PBPRA1738 (150 aa).

The protein belongs to the UPF0178 family.

The chain is UPF0178 protein PBPRA1738 from Photobacterium profundum (strain SS9).